The chain runs to 105 residues: Large ribosomal subunit protein uL24 (105 aa).

This sequence belongs to the universal ribosomal protein uL24 family. Part of the 50S ribosomal subunit.

Its function is as follows. One of two assembly initiator proteins, it binds directly to the 5'-end of the 23S rRNA, where it nucleates assembly of the 50S subunit. One of the proteins that surrounds the polypeptide exit tunnel on the outside of the subunit. This Francisella tularensis subsp. tularensis (strain FSC 198) protein is Large ribosomal subunit protein uL24.